A 117-amino-acid polypeptide reads, in one-letter code: MPTIQQLIRNARQPIENRKKSPALRGCPQRRGTITPKKPNSALRKVARVRLTSGFEITAYIPGIDHNLQEHSVVLVRGGRVKDLPGVRYHIVRGTLDAAEVKDRQQGRSKYGVKKPK.

A disordered region spans residues 9-40 (RNARQPIENRKKSPALRGCPQRRGTITPKKPN).

Belongs to the universal ribosomal protein uS12 family. In terms of assembly, part of the 30S ribosomal subunit.

It localises to the plastid. The protein localises to the chloroplast. Its function is as follows. With S4 and S5 plays an important role in translational accuracy. Located at the interface of the 30S and 50S subunits. The sequence is that of Small ribosomal subunit protein uS12c (rps12) from Pinus koraiensis (Korean pine).